The chain runs to 831 residues: Serine/threonine-protein kinase ATG1 (831 aa).

The Protein kinase domain occupies 21–321 (YSVEKEIGKG…FTDFFNNEVV (301 aa)). ATP is bound by residues 27 to 35 (IGKGSFAVV) and lysine 50. The active-site Proton acceptor is the aspartate 168. Composition is skewed to polar residues over residues 360–382 (QQESAHIPPTQTDENTSVQTGVR) and 405–419 (NSQNPEQSYQSASQK). The tract at residues 360 to 419 (QQESAHIPPTQTDENTSVQTGVRRTSGKERLATNHPPHQQIHPEDNSQNPEQSYQSASQK) is disordered.

The protein belongs to the protein kinase superfamily. Ser/Thr protein kinase family. APG1/unc-51/ULK1 subfamily. As to quaternary structure, homodimer. Forms a ternary complex with ATG13 and ATG17.

It is found in the cytoplasm. The protein localises to the preautophagosomal structure membrane. The catalysed reaction is L-seryl-[protein] + ATP = O-phospho-L-seryl-[protein] + ADP + H(+). The enzyme catalyses L-threonyl-[protein] + ATP = O-phospho-L-threonyl-[protein] + ADP + H(+). In terms of biological role, serine/threonine protein kinase involved in the cytoplasm to vacuole transport (Cvt) and found to be essential in autophagy, where it is required for the formation of autophagosomes. Involved in the clearance of protein aggregates which cannot be efficiently cleared by the proteasome. Required for selective autophagic degradation of the nucleus (nucleophagy) as well as for mitophagy which contributes to regulate mitochondrial quantity and quality by eliminating the mitochondria to a basal level to fulfill cellular energy requirements and preventing excess ROS production. Also involved in endoplasmic reticulum-specific autophagic process, in selective removal of ER-associated degradation (ERAD) substrates. Plays a key role in ATG9 and ATG23 cycling through the pre-autophagosomal structure and is necessary to promote ATG18 binding to ATG9 through phosphorylation of ATG9. Catalyzes phosphorylation of ATG4, decreasing the interaction between ATG4 and ATG8 and impairing deconjugation of PE-conjugated forms of ATG8. The sequence is that of Serine/threonine-protein kinase ATG1 from Kluyveromyces lactis (strain ATCC 8585 / CBS 2359 / DSM 70799 / NBRC 1267 / NRRL Y-1140 / WM37) (Yeast).